Here is a 216-residue protein sequence, read N- to C-terminus: DegV domain-containing protein UU190 (216 aa).

Residues 1-215 form the DegV domain; sequence MLWKNLDELF…LNNFAILIEA (215 aa). Ser26 is a binding site for hexadecanoate.

Its function is as follows. May bind long-chain fatty acids, such as palmitate, and may play a role in lipid transport or fatty acid metabolism. The chain is DegV domain-containing protein UU190 from Ureaplasma parvum serovar 3 (strain ATCC 700970).